A 906-amino-acid polypeptide reads, in one-letter code: Protein translocase subunit SecA (906 aa).

Residues Gln87, 105–109, and Asp512 each bind ATP; that span reads GEGKT. Residues 839–896 are disordered; the sequence is LEEQQRQQSEAAPRTYTHATAESQLADEEAAGEEGHTTFVRDEQKIGRNDPCPCGSGK. The segment covering 871–886 has biased composition (basic and acidic residues); the sequence is EEGHTTFVRDEQKIGR. Cys890, Cys892, Cys901, and His902 together coordinate Zn(2+).

It belongs to the SecA family. In terms of assembly, monomer and homodimer. Part of the essential Sec protein translocation apparatus which comprises SecA, SecYEG and auxiliary proteins SecDF-YajC and YidC. Zn(2+) serves as cofactor.

The protein localises to the cell inner membrane. Its subcellular location is the cytoplasm. The catalysed reaction is ATP + H2O + cellular proteinSide 1 = ADP + phosphate + cellular proteinSide 2.. Part of the Sec protein translocase complex. Interacts with the SecYEG preprotein conducting channel. Has a central role in coupling the hydrolysis of ATP to the transfer of proteins into and across the cell membrane, serving both as a receptor for the preprotein-SecB complex and as an ATP-driven molecular motor driving the stepwise translocation of polypeptide chains across the membrane. The protein is Protein translocase subunit SecA of Aeromonas salmonicida (strain A449).